The primary structure comprises 801 residues: Elongation factor G, mitochondrial (801 aa).

The transit peptide at 1-65 (MRVQSLLRAQ…QKIQNQRRWQ (65 aa)) directs the protein to the mitochondrion. Residues 100-387 (SRVRNIGIAA…AVCDYLPNPS (288 aa)) form the tr-type G domain. Residues 109–116 (AHIDSGKT), 185–189 (DTPGH), and 239–242 (NKMD) each bind GTP.

It belongs to the TRAFAC class translation factor GTPase superfamily. Classic translation factor GTPase family. EF-G/EF-2 subfamily.

It is found in the mitochondrion. Its pathway is protein biosynthesis; polypeptide chain elongation. Its function is as follows. Mitochondrial GTPase that catalyzes the GTP-dependent ribosomal translocation step during translation elongation. During this step, the ribosome changes from the pre-translocational (PRE) to the post-translocational (POST) state as the newly formed A-site-bound peptidyl-tRNA and P-site-bound deacylated tRNA move to the P and E sites, respectively. Catalyzes the coordinated movement of the two tRNA molecules, the mRNA and conformational changes in the ribosome. This Pyrenophora tritici-repentis (strain Pt-1C-BFP) (Wheat tan spot fungus) protein is Elongation factor G, mitochondrial (mef1).